A 693-amino-acid polypeptide reads, in one-letter code: Phosphoribosylformylglycinamidine synthase subunit PurL (693 aa).

H34 is a catalytic residue. Residues Y37 and K76 each contribute to the ATP site. A Mg(2+)-binding site is contributed by E78. Residues 79–82 (SHNH) and R101 each bind substrate. H80 functions as the Proton acceptor in the catalytic mechanism. D102 lines the Mg(2+) pocket. A substrate-binding site is contributed by Q222. D248 serves as a coordination point for Mg(2+). 292 to 294 (ETQ) serves as a coordination point for substrate. ATP is bound by residues D470 and G507. S510 provides a ligand contact to substrate.

This sequence belongs to the FGAMS family. In terms of assembly, monomer. Part of the FGAM synthase complex composed of 1 PurL, 1 PurQ and 2 PurS subunits.

The protein resides in the cytoplasm. It carries out the reaction N(2)-formyl-N(1)-(5-phospho-beta-D-ribosyl)glycinamide + L-glutamine + ATP + H2O = 2-formamido-N(1)-(5-O-phospho-beta-D-ribosyl)acetamidine + L-glutamate + ADP + phosphate + H(+). It participates in purine metabolism; IMP biosynthesis via de novo pathway; 5-amino-1-(5-phospho-D-ribosyl)imidazole from N(2)-formyl-N(1)-(5-phospho-D-ribosyl)glycinamide: step 1/2. Its function is as follows. Part of the phosphoribosylformylglycinamidine synthase complex involved in the purines biosynthetic pathway. Catalyzes the ATP-dependent conversion of formylglycinamide ribonucleotide (FGAR) and glutamine to yield formylglycinamidine ribonucleotide (FGAM) and glutamate. The FGAM synthase complex is composed of three subunits. PurQ produces an ammonia molecule by converting glutamine to glutamate. PurL transfers the ammonia molecule to FGAR to form FGAM in an ATP-dependent manner. PurS interacts with PurQ and PurL and is thought to assist in the transfer of the ammonia molecule from PurQ to PurL. This is Phosphoribosylformylglycinamidine synthase subunit PurL from Pyrobaculum islandicum (strain DSM 4184 / JCM 9189 / GEO3).